The chain runs to 136 residues: Crossover junction endodeoxyribonuclease Hjc (136 aa).

Mg(2+) is bound at residue Glu-9. Residue Ser-29 is part of the active site. Residues Asp-38 and Glu-51 each coordinate Mg(2+).

The protein belongs to the Holliday junction resolvase Hjc family. In terms of assembly, homodimer. Requires Mg(2+) as cofactor.

It carries out the reaction Endonucleolytic cleavage at a junction such as a reciprocal single-stranded crossover between two homologous DNA duplexes (Holliday junction).. A structure-specific endonuclease that resolves Holliday junction (HJ) intermediates during genetic recombination. Cleaves 4-way DNA junctions introducing paired nicks in opposing strands, leaving a 5'-terminal phosphate and a 3'-terminal hydroxyl group that are subsequently ligated to produce recombinant products. This chain is Crossover junction endodeoxyribonuclease Hjc, found in Archaeoglobus fulgidus (strain ATCC 49558 / DSM 4304 / JCM 9628 / NBRC 100126 / VC-16).